A 260-amino-acid polypeptide reads, in one-letter code: 5'-nucleotidase SurE (260 aa).

Aspartate 8, aspartate 9, serine 43, and asparagine 96 together coordinate a divalent metal cation.

It belongs to the SurE nucleotidase family. Requires a divalent metal cation as cofactor.

The protein resides in the cytoplasm. The enzyme catalyses a ribonucleoside 5'-phosphate + H2O = a ribonucleoside + phosphate. Its function is as follows. Nucleotidase that shows phosphatase activity on nucleoside 5'-monophosphates. The chain is 5'-nucleotidase SurE from Ruegeria sp. (strain TM1040) (Silicibacter sp.).